The chain runs to 790 residues: Vacuolar protein sorting-associated protein 35C (790 aa).

Met-1 is modified (N-acetylmethionine).

This sequence belongs to the VPS35 family. In terms of assembly, component of the retromer complex which consists of VPS29 (MAG1), VPS26 (VPS26A or VPS26B), VPS35 (VPS35A or VPS35B or VPS35C), VPS5/17 (SNX1 or SNX2A or SNX2B). Component of a retromer subcomplex consisting of VPS29 (MAG1), VPS26 (VPS26A or VPS26B), VPS35 (VPS35A or VPS35B or VPS35C).

The protein localises to the cytoplasm. It localises to the endosome membrane. Its subcellular location is the prevacuolar compartment membrane. It is found in the golgi apparatus. The protein resides in the trans-Golgi network membrane. Its function is as follows. Plays a role in vesicular protein sorting. Component of the membrane-associated retromer complex which is essential in endosome-to-Golgi retrograde transport. Also involved in the efficient sorting of seed storage proteins. The VPS29-VPS26-VPS35 subcomplex may be involved in recycling of specific cargos from endosome to the plasma membrane. This is Vacuolar protein sorting-associated protein 35C (VPS35C) from Arabidopsis thaliana (Mouse-ear cress).